The following is a 748-amino-acid chain: Methylmalonyl-CoA mutase, mitochondrial (748 aa).

Residues 1–30 (MLRAKNQLFLLSPHYLKQLNIPSASRWKRL) constitute a mitochondrion transit peptide. Residue Gln-48 coordinates malonyl-CoA. The residue at position 87 (Lys-87) is an N6-acetyllysine. Malonyl-CoA contacts are provided by residues 94–97 (YPTM) and 104–108 (TIRQY). The residue at position 210 (Lys-210) is an N6-acetyllysine. Residues 214-216 (TIQ), Arg-226, Lys-253, His-263, and 302-304 (RLS) contribute to the malonyl-CoA site. Residue Lys-333 is modified to N6-acetyllysine. N6-succinyllysine is present on Lys-341. The residue at position 479 (Ser-479) is a Phosphoserine. Position 593 is an N6-succinyllysine (Lys-593). Lys-600 bears the N6-acetyllysine mark. The 133-residue stretch at 612–744 (RPRLLVAKMG…DDIEKCLAEK (133 aa)) folds into the B12-binding domain. An adenosylcob(III)alamin-binding site is contributed by His-625.

This sequence belongs to the methylmalonyl-CoA mutase family. Homodimer. Interacts (the apoenzyme form) with MMAA; the interaction is GTP dependent. Adenosylcob(III)alamin is required as a cofactor.

It is found in the mitochondrion matrix. The protein resides in the mitochondrion. Its subcellular location is the cytoplasm. The catalysed reaction is (R)-methylmalonyl-CoA = succinyl-CoA. Its activity is regulated as follows. Inhibited by itaconyl-CoA, a metabolite that inactivates the coenzyme B12 cofactor. Its function is as follows. Catalyzes the reversible isomerization of methylmalonyl-CoA (MMCoA) (generated from branched-chain amino acid metabolism and degradation of dietary odd chain fatty acids and cholesterol) to succinyl-CoA (3-carboxypropionyl-CoA), a key intermediate of the tricarboxylic acid cycle. This is Methylmalonyl-CoA mutase, mitochondrial (Mmut) from Mus musculus (Mouse).